Reading from the N-terminus, the 451-residue chain is UDP-N-acetylmuramoylalanine--D-glutamate ligase (451 aa).

118–124 serves as a coordination point for ATP; sequence GTKGKST.

The protein belongs to the MurCDEF family.

It localises to the cytoplasm. The catalysed reaction is UDP-N-acetyl-alpha-D-muramoyl-L-alanine + D-glutamate + ATP = UDP-N-acetyl-alpha-D-muramoyl-L-alanyl-D-glutamate + ADP + phosphate + H(+). It participates in cell wall biogenesis; peptidoglycan biosynthesis. Its function is as follows. Cell wall formation. Catalyzes the addition of glutamate to the nucleotide precursor UDP-N-acetylmuramoyl-L-alanine (UMA). The sequence is that of UDP-N-acetylmuramoylalanine--D-glutamate ligase from Borreliella afzelii (strain PKo) (Borrelia afzelii).